Consider the following 441-residue polypeptide: Nucleoprotein (441 aa).

Phosphoserine; by host is present on S5. The 123-residue stretch at 14–136 (VPLSLYAPLR…QLPSVVEIVE (123 aa)) folds into the CoV N NTD domain. Residues 16 to 146 (LSLYAPLRVT…PNTPPASRAN (131 aa)) are RNA-binding. Disordered stretches follow at residues 131–219 (VVEI…VTSR) and 231–278 (KSLG…LKDI). Phosphoserine; by host is present on S143. Residues 143–215 (SRANSRSRSR…NRNQSNDRGG (73 aa)) show a composition bias toward low complexity. Composition is skewed to basic and acidic residues over residues 238–255 (NPDR…KSDN) and 269–278 (TSKERDLKDI). The CoV N CTD domain maps to 266–382 (SRATSKERDL…AFKTGNAKLQ (117 aa)). Residues 277-379 (DIPEWRRIPK…QVDAFKTGNA (103 aa)) form a dimerization region.

It belongs to the alphacoronavirus nucleocapsid protein family. Homooligomer. Both monomeric and oligomeric forms interact with RNA. Interacts with protein M. Interacts with NSP3; this interaction serves to tether the genome to the newly translated replicase-transcriptase complex at a very early stage of infection. Interacts with host RSAD2; this interaction inhibits viral replication. ADP-ribosylated. The ADP-ribosylation is retained in the virion during infection. Post-translationally, phosphorylated on serine and threonine residues.

It localises to the virion. The protein resides in the host endoplasmic reticulum-Golgi intermediate compartment. Its subcellular location is the host Golgi apparatus. Its function is as follows. Packages the positive strand viral genome RNA into a helical ribonucleocapsid (RNP) and plays a fundamental role during virion assembly through its interactions with the viral genome and membrane protein M. Plays an important role in enhancing the efficiency of subgenomic viral RNA transcription as well as viral replication. The chain is Nucleoprotein from Porcine epidemic diarrhea virus (strain CV777) (PEDV).